Reading from the N-terminus, the 176-residue chain is Adenine phosphoribosyltransferase (176 aa).

This sequence belongs to the purine/pyrimidine phosphoribosyltransferase family. In terms of assembly, homodimer.

The protein resides in the cytoplasm. The enzyme catalyses AMP + diphosphate = 5-phospho-alpha-D-ribose 1-diphosphate + adenine. Its pathway is purine metabolism; AMP biosynthesis via salvage pathway; AMP from adenine: step 1/1. Functionally, catalyzes a salvage reaction resulting in the formation of AMP, that is energically less costly than de novo synthesis. This chain is Adenine phosphoribosyltransferase, found in Borreliella burgdorferi (strain ATCC 35210 / DSM 4680 / CIP 102532 / B31) (Borrelia burgdorferi).